Here is a 147-residue protein sequence, read N- to C-terminus: Large ribosomal subunit protein uL22c (147 aa).

The protein belongs to the universal ribosomal protein uL22 family. As to quaternary structure, part of the 50S ribosomal subunit.

The protein resides in the plastid. Its function is as follows. This protein binds specifically to 23S rRNA. The globular domain of the protein is located near the polypeptide exit tunnel on the outside of the subunit, while an extended beta-hairpin is found that lines the wall of the exit tunnel in the center of the 70S ribosome. The sequence is that of Large ribosomal subunit protein uL22c (rpl22) from Cuscuta obtusiflora (Peruvian dodder).